Here is a 552-residue protein sequence, read N- to C-terminus: Hyaluronan synthase 2 (552 aa).

Residues 1–11 (MHCERFLCVLR) are Cytoplasmic-facing. The helical transmembrane segment at 12–32 (IIGTTLFGVSLLLGITAAYIV) threads the bilayer. The Extracellular portion of the chain corresponds to 33–45 (GYQFIQTDNYYFS). Residues 46 to 66 (FGLYGAFLASHLIIQSLFAFL) traverse the membrane as a helical segment. Residues 67 to 374 (EHRKMKKSLE…NAMWFHKHHL (308 aa)) are Cytoplasmic-facing. The residue at position 110 (T110) is a Phosphothreonine. K190 is covalently cross-linked (Glycyl lysine isopeptide (Lys-Gly) (interchain with G-Cter in ubiquitin)). O-linked (GlcNAc) serine glycosylation is present at S221. T328 is subject to Phosphothreonine. The helical transmembrane segment at 375-395 (WMTYEAVITGFFPFFLIATVI) threads the bilayer. The Extracellular segment spans residues 396-402 (QLFYRGK). The helical transmembrane segment at 403-423 (IWNILLFLLTVQLVGLIKSSF) threads the bilayer. Topologically, residues 424-429 (ASCLRG) are cytoplasmic. The helical transmembrane segment at 430-450 (NIVMVFMSLYSVLYMSSLLPA) threads the bilayer. The Extracellular segment spans residues 451-475 (KMFAIATINKAGWGTSGRKTIVVNF). A helical membrane pass occupies residues 476-496 (IGLIPVSVWFTILLGGVIFTI). Over 497–510 (YKESKKPFSESKQT) the chain is Cytoplasmic. Residues 511 to 531 (VLIVGTLIYACYWVVLLTLYV) form a helical membrane-spanning segment. Residues 532–552 (VLINKCGRRKKGQQYDMVLDV) are Extracellular-facing.

It belongs to the NodC/HAS family. As to quaternary structure, homodimer; dimerization promotes enzymatic activity. Forms heterodimer with HAS3. Forms heterodimer with HAS1. It depends on Mg(2+) as a cofactor. Phosphorylation at Thr-328 is essential for hyaluronan synthase activity. In terms of processing, O-GlcNAcylation at Ser-221 increases the stability of HAS2 and plasma membrane localization. Post-translationally, ubiquitination at Lys-190; this ubiquitination is essential for hyaluronan synthase activity and homo- or hetero-oligomerization. Can also be poly-ubiquitinated. Deubiquitinated by USP17L22/USP17 and USP4. USP17L22/USP17 efficiently removes 'Lys-63'- and 'Lys-48'-linked polyubiquitin chains, whereas USP4 preferentially removes monoubiquitination and, partially, both 'Lys-63'- and 'Lys-48'-linked polyubiquitin chain.

Its subcellular location is the cell membrane. The protein resides in the endoplasmic reticulum membrane. The protein localises to the vesicle. It localises to the golgi apparatus membrane. It is found in the lysosome. It catalyses the reaction [hyaluronan](n) + UDP-N-acetyl-alpha-D-glucosamine = N-acetyl-beta-D-glucosaminyl-(1-&gt;4)-[hyaluronan](n) + UDP + H(+). The enzyme catalyses N-acetyl-beta-D-glucosaminyl-(1-&gt;4)-[hyaluronan](n) + UDP-alpha-D-glucuronate = [hyaluronan](n+1) + UDP + H(+). It functions in the pathway glycan biosynthesis; hyaluronan biosynthesis. Its function is as follows. Catalyzes the addition of GlcNAc or GlcUA monosaccharides to the nascent hyaluronan polymer. Therefore, it is essential to hyaluronan synthesis a major component of most extracellular matrices that has a structural role in tissues architectures and regulates cell adhesion, migration and differentiation. This is one of three isoenzymes responsible for cellular hyaluronan synthesis and it is particularly responsible for the synthesis of high molecular mass hyaluronan. This chain is Hyaluronan synthase 2 (Has2), found in Rattus norvegicus (Rat).